The following is a 224-amino-acid chain: Orotate phosphoribosyltransferase (224 aa).

Residues K26, 73 to 74, R100, K101, K104, H106, and 127 to 135 contribute to the 5-phospho-alpha-D-ribose 1-diphosphate site; these read YK and EDVTTSGKS. Positions 131 and 160 each coordinate orotate.

It belongs to the purine/pyrimidine phosphoribosyltransferase family. PyrE subfamily. In terms of assembly, homodimer. Requires Mg(2+) as cofactor.

It carries out the reaction orotidine 5'-phosphate + diphosphate = orotate + 5-phospho-alpha-D-ribose 1-diphosphate. It participates in pyrimidine metabolism; UMP biosynthesis via de novo pathway; UMP from orotate: step 1/2. In terms of biological role, catalyzes the transfer of a ribosyl phosphate group from 5-phosphoribose 1-diphosphate to orotate, leading to the formation of orotidine monophosphate (OMP). This chain is Orotate phosphoribosyltransferase, found in Clostridium botulinum (strain Alaska E43 / Type E3).